The following is a 335-amino-acid chain: Putative zinc metalloprotease CPE1693 (335 aa).

Zn(2+) is bound at residue H17. E18 is an active-site residue. H21 serves as a coordination point for Zn(2+). The next 3 helical transmembrane spans lie at 88 to 110, 262 to 284, and 312 to 334; these read ILVM…IGLA, LLWF…FPAL, and TVGF…IFPI. The PDZ domain maps to 96–174; sequence FMNYVLALII…PVELEIKRGN (79 aa).

This sequence belongs to the peptidase M50B family. It depends on Zn(2+) as a cofactor.

It localises to the cell membrane. The protein is Putative zinc metalloprotease CPE1693 of Clostridium perfringens (strain 13 / Type A).